The following is a 315-amino-acid chain: Small ribosomal subunit protein uS9m (315 aa).

Residues 1–42 constitute a mitochondrion transit peptide; sequence MMASLRHSITSALRSSRQGCSKSAQWQSLDQQFGALRISSRS. Residues 293 to 315 are disordered; it reads PRKVERKKHGHVKARKMPTWVKR. Basic residues predominate over residues 296 to 315; the sequence is VERKKHGHVKARKMPTWVKR.

The protein belongs to the universal ribosomal protein uS9 family. As to quaternary structure, component of the mitochondrial small ribosomal subunit (mt-SSU). Mature N.crassa 74S mitochondrial ribosomes consist of a small (37S) and a large (54S) subunit. The 37S small subunit contains a 16S ribosomal RNA (16S mt-rRNA) and 32 different proteins. The 54S large subunit contains a 23S rRNA (23S mt-rRNA) and 42 different proteins.

Its subcellular location is the mitochondrion. Functionally, component of the mitochondrial ribosome (mitoribosome), a dedicated translation machinery responsible for the synthesis of mitochondrial genome-encoded proteins, including at least some of the essential transmembrane subunits of the mitochondrial respiratory chain. The mitoribosomes are attached to the mitochondrial inner membrane and translation products are cotranslationally integrated into the membrane. This is Small ribosomal subunit protein uS9m (mrp-9) from Neurospora crassa (strain ATCC 24698 / 74-OR23-1A / CBS 708.71 / DSM 1257 / FGSC 987).